A 458-amino-acid chain; its full sequence is Sphingomyelinase DDB_G0288017 (458 aa).

The segment at 91-111 (NKKAKSPPPPSSLKQQNLHNN) is disordered. A Mg(2+)-binding site is contributed by E135. H447 acts as the Proton acceptor in catalysis.

It belongs to the neutral sphingomyelinase family. Mg(2+) is required as a cofactor.

The enzyme catalyses a sphingomyelin + H2O = phosphocholine + an N-acylsphing-4-enine + H(+). It participates in lipid metabolism; sphingolipid metabolism. In terms of biological role, catalyzes the hydrolysis of sphingomyelin to form ceramide and phosphocholine. In Dictyostelium discoideum (Social amoeba), this protein is Sphingomyelinase DDB_G0288017.